Reading from the N-terminus, the 370-residue chain is 3-isopropylmalate dehydrogenase (370 aa).

NAD(+) is bound at residue 76–89 (GPKWDQNPSELRPE). Residues Arg-96, Arg-106, Arg-134, and Asp-224 each coordinate substrate. 3 residues coordinate Mg(2+): Asp-224, Asp-248, and Asp-252. 282–294 (GSAPDIAGQNIAN) lines the NAD(+) pocket.

Belongs to the isocitrate and isopropylmalate dehydrogenases family. LeuB type 1 subfamily. As to quaternary structure, homodimer. Mg(2+) is required as a cofactor. The cofactor is Mn(2+).

The protein localises to the cytoplasm. The catalysed reaction is (2R,3S)-3-isopropylmalate + NAD(+) = 4-methyl-2-oxopentanoate + CO2 + NADH. The protein operates within amino-acid biosynthesis; L-leucine biosynthesis; L-leucine from 3-methyl-2-oxobutanoate: step 3/4. Catalyzes the oxidation of 3-carboxy-2-hydroxy-4-methylpentanoate (3-isopropylmalate) to 3-carboxy-4-methyl-2-oxopentanoate. The product decarboxylates to 4-methyl-2 oxopentanoate. The protein is 3-isopropylmalate dehydrogenase of Bacillus licheniformis (strain ATCC 14580 / DSM 13 / JCM 2505 / CCUG 7422 / NBRC 12200 / NCIMB 9375 / NCTC 10341 / NRRL NRS-1264 / Gibson 46).